Reading from the N-terminus, the 139-residue chain is Large ribosomal subunit protein uL14A (139 aa).

This sequence belongs to the universal ribosomal protein uL14 family. Component of the large ribosomal subunit (LSU). Mature yeast ribosomes consist of a small (40S) and a large (60S) subunit. The 40S small subunit contains 1 molecule of ribosomal RNA (18S rRNA) and at least 33 different proteins. The large 60S subunit contains 3 rRNA molecules (25S, 5.8S and 5S rRNA) and at least 46 different proteins.

The protein resides in the cytoplasm. The protein localises to the nucleus. Its function is as follows. Component of the ribosome, a large ribonucleoprotein complex responsible for the synthesis of proteins in the cell. The small ribosomal subunit (SSU) binds messenger RNAs (mRNAs) and translates the encoded message by selecting cognate aminoacyl-transfer RNA (tRNA) molecules. The large subunit (LSU) contains the ribosomal catalytic site termed the peptidyl transferase center (PTC), which catalyzes the formation of peptide bonds, thereby polymerizing the amino acids delivered by tRNAs into a polypeptide chain. The nascent polypeptides leave the ribosome through a tunnel in the LSU and interact with protein factors that function in enzymatic processing, targeting, and the membrane insertion of nascent chains at the exit of the ribosomal tunnel. In Schizosaccharomyces pombe (strain 972 / ATCC 24843) (Fission yeast), this protein is Large ribosomal subunit protein uL14A (rpl2301).